The primary structure comprises 236 residues: Serine/arginine-rich SC35-like splicing factor SCL28 (236 aa).

Disordered regions lie at residues 1–53 (MARA…LIRN) and 124–219 (EENR…RVLT). The segment covering 14–43 (RPRDRSPPRERKGYDDNRLRERPSSRDHES) has biased composition (basic and acidic residues). The region spanning 47–125 (SGLLIRNLPL…REIAIVFAEE (79 aa)) is the RRM domain. A compositionally biased stretch (basic residues) spans 149-176 (TSHRSPRRRYRSHSRSRSPPRRESRHSK). Ser-184 is subject to Phosphoserine. Residues 199-217 (RNEREYKSRNCRSPREERV) show a composition bias toward basic and acidic residues.

Belongs to the splicing factor SR family. SCL subfamily. As to quaternary structure, component of the spliceosome. Interacts with RS2Z33, CYP59, CYP63 and CYP95.

The protein resides in the nucleus speckle. Involved in intron recognition and spliceosome assembly. Probably active at the 5' splice sites. The protein is Serine/arginine-rich SC35-like splicing factor SCL28 (SCL28) of Arabidopsis thaliana (Mouse-ear cress).